A 670-amino-acid polypeptide reads, in one-letter code: Probable Na(+)/H(+) antiporter nhx-3 (670 aa).

8 helical membrane passes run valine 41–methionine 61, leucine 73–valine 93, serine 97–proline 117, leucine 129–isoleucine 149, glutamate 164–phenylalanine 184, phenylalanine 192–tyrosine 212, glycine 235–alanine 255, and isoleucine 268–valine 288. A glycan (N-linked (GlcNAc...) asparagine) is linked at asparagine 310. 4 helical membrane-spanning segments follow: residues methionine 325 to serine 345, phenylalanine 351 to valine 371, phenylalanine 390 to proline 410, and methionine 418 to isoleucine 438. A disordered region spans residues glycine 648–valine 670.

Belongs to the monovalent cation:proton antiporter 1 (CPA1) transporter (TC 2.A.36) family. Post-translationally, phosphorylated. As to expression, expressed in hypodermal cells of the main body syncytium, ut1 cells of the vulva and the spermathecal junction cell.

The protein resides in the endomembrane system. Its function is as follows. Plays a role in epithelial membrane transport processes. In Caenorhabditis elegans, this protein is Probable Na(+)/H(+) antiporter nhx-3 (nhx-3).